The sequence spans 128 residues: Cytochrome c' (128 aa).

Gln13, Gln17, Glu69, Thr70, Cys118, Cys121, and His122 together coordinate heme c.

In terms of assembly, homodimer. Binds 1 heme c group covalently per subunit.

Cytochrome c' is the most widely occurring bacterial c-type cytochrome. Cytochromes c' are high-spin proteins and the heme has no sixth ligand. Their exact function is not known. In Magnetospirillum molischianum (Rhodospirillum molischianum), this protein is Cytochrome c'.